The sequence spans 1473 residues: Collagen alpha-1(XVII) chain (1473 aa).

A compositionally biased stretch (basic and acidic residues) spans 1–19; sequence MDITQKNKRDGTEVTERII. Disordered stretches follow at residues 1–155 and 168–188; these read MDIT…PSTR and GSRSASVSPTRNSSNTLPIPK. The Cytoplasmic portion of the chain corresponds to 1–474; that stretch reads MDITQKNKRD…CGSWCSWWKW (474 aa). The nonhelical region (NC16) stretch occupies residues 1–572; sequence MDITQKNKRD…MTEQENGNLR (572 aa). Polar residues-rich tracts occupy residues 57-96, 111-120, and 170-184; these read LTHGSSGYINSSGSLRGNASTSSYRRAHSPASTLPNSPGS, EGSSSGNSSP, and RSASVSPTRNSSNTL. Positions 146–231 are necessary for interaction with DST and for the recruitment of DST to hemidesmosome; that stretch reads RLQSASPSTR…WSSTLPAGSS (86 aa). The chain crosses the membrane as a helical; Signal-anchor for type II membrane protein span at residues 475-495; that stretch reads LLGLLLTWLLLLGLLFGLIAL. The Extracellular portion of the chain corresponds to 496 to 1473; sequence AEEVRKLKAR…RRRRSIAVKP (978 aa). 3 disordered regions span residues 567-1017, 1173-1234, and 1261-1308; these read ENGN…LSSS, FRGI…ISGA, and SFIV…SSMG. Residues 573–1459 form a triple-helical region region; sequence GSPGPKGDMG…KGEKGDKGDQ (887 aa). Composition is skewed to low complexity over residues 619–638, 667–678, 729–742, and 769–790; these read EPGMEGPMGQRGREGPMGPR, PGSVGPKGSIGP, EPGAKGAMGPAGPD, and PGKPGLTGPQGPQGIPGTPGRP. Over residues 814–835 the composition is skewed to pro residues; that stretch reads PGPPGPPGAMGPPGPPGAPGPV. Low complexity-rich tracts occupy residues 837–847 and 854–866; these read PAGLPGQQGPR and GESFMGSSSSFSE. Pro residues-rich tracts occupy residues 878-899 and 913-922; these read PPGPPGPPGPPGEGLPGPPGPP and PPGPPGPPGP. Residues 940–957 are compositionally biased toward low complexity; the sequence is FPGLSGSGSSSLGLNLQG. 2 stretches are compositionally biased toward pro residues: residues 1001–1011 and 1179–1188; these read PPGPPGPPGPP and PPGPPGPPGL. Positions 1198–1210 are enriched in polar residues; the sequence is TEDLSSYLQTAGL. Pro residues-rich tracts occupy residues 1214–1228 and 1266–1275; these read PGPPGPPGPPGPRGP and PPGPPGPQGP. Positions 1283–1307 are enriched in low complexity; it reads STDSSYSRSGSSSSFSRDTSYSSSM. Residue Asn1404 is glycosylated (N-linked (GlcNAc...) asparagine). The interval 1417–1473 is disordered; that stretch reads GAIPGPPGQKGEMGIPGPKGERGPAGPPGPRGHKGEKGDKGDQFYIGRRRRSIAVKP. The segment covering 1449–1458 has biased composition (basic and acidic residues); it reads HKGEKGDKGD. The interval 1460 to 1473 is nonhelical region (NC1); sequence FYIGRRRRSIAVKP. The segment covering 1463 to 1473 has biased composition (basic residues); the sequence is GRRRRSIAVKP.

As to quaternary structure, homotrimers of alpha 1(XVII)chains. Interacts (via cytoplasmic region) with ITGB4 (via cytoplasmic region). Interacts (via cytoplasmic region) with DST (via N-terminus). Interacts (via N-terminus) with PLEC. Interacts (via cytoplasmic region) with DSP. Post-translationally, the intracellular/endo domain is disulfide-linked. Prolines at the third position of the tripeptide repeating unit (G-X-Y) are hydroxylated in some or all of the chains. In terms of processing, the ectodomain is shedded from the surface of keratinocytes resulting in a 120-kDa soluble form, also named as 120 kDa linear IgA disease antigen homolog. The shedding is mediated by membrane-bound metalloproteases.

It localises to the cell junction. Its subcellular location is the hemidesmosome. The protein resides in the membrane. It is found in the secreted. The protein localises to the extracellular space. It localises to the extracellular matrix. Its subcellular location is the basement membrane. May play a role in the integrity of hemidesmosome and the attachment of basal keratinocytes to the underlying basement membrane. Its function is as follows. The 120 kDa linear IgA disease antigen homolog is an anchoring filament component involved in dermal-epidermal cohesion. This is Collagen alpha-1(XVII) chain (COL17A1) from Bos taurus (Bovine).